The chain runs to 418 residues: Serine--tRNA ligase (418 aa).

Residue 228 to 230 (TSE) coordinates L-serine. ATP contacts are provided by residues 258 to 260 (RKE) and Val-274. Residue Glu-281 participates in L-serine binding. ATP is bound at residue 345-348 (EVVS). Thr-381 contributes to the L-serine binding site.

Belongs to the class-II aminoacyl-tRNA synthetase family. Type-1 seryl-tRNA synthetase subfamily. In terms of assembly, homodimer. The tRNA molecule binds across the dimer.

The protein resides in the cytoplasm. The catalysed reaction is tRNA(Ser) + L-serine + ATP = L-seryl-tRNA(Ser) + AMP + diphosphate + H(+). It catalyses the reaction tRNA(Sec) + L-serine + ATP = L-seryl-tRNA(Sec) + AMP + diphosphate + H(+). The protein operates within aminoacyl-tRNA biosynthesis; selenocysteinyl-tRNA(Sec) biosynthesis; L-seryl-tRNA(Sec) from L-serine and tRNA(Sec): step 1/1. In terms of biological role, catalyzes the attachment of serine to tRNA(Ser). Is also able to aminoacylate tRNA(Sec) with serine, to form the misacylated tRNA L-seryl-tRNA(Sec), which will be further converted into selenocysteinyl-tRNA(Sec). This chain is Serine--tRNA ligase, found in Cenarchaeum symbiosum (strain A).